The chain runs to 512 residues: tRNA-2-methylthio-N(6)-dimethylallyladenosine synthase (512 aa).

Positions 17 to 133 (RTYEVRTFGC…LPTLLERSAH (117 aa)) constitute an MTTase N-terminal domain. Cys-26, Cys-62, Cys-96, Cys-170, Cys-174, and Cys-177 together coordinate [4Fe-4S] cluster. The 237-residue stretch at 156–392 (RESAYAGWVS…LALQERISEE (237 aa)) folds into the Radical SAM core domain. The TRAM domain maps to 395–461 (RKLIGTTQEL…PHFLIADGGV (67 aa)). A disordered region spans residues 473–512 (TELGETPTTAPVGVGLGMPSIKKPEPTTAGGCSTGGCGCE).

This sequence belongs to the methylthiotransferase family. MiaB subfamily. As to quaternary structure, monomer. The cofactor is [4Fe-4S] cluster.

The protein resides in the cytoplasm. It catalyses the reaction N(6)-dimethylallyladenosine(37) in tRNA + (sulfur carrier)-SH + AH2 + 2 S-adenosyl-L-methionine = 2-methylsulfanyl-N(6)-dimethylallyladenosine(37) in tRNA + (sulfur carrier)-H + 5'-deoxyadenosine + L-methionine + A + S-adenosyl-L-homocysteine + 2 H(+). Catalyzes the methylthiolation of N6-(dimethylallyl)adenosine (i(6)A), leading to the formation of 2-methylthio-N6-(dimethylallyl)adenosine (ms(2)i(6)A) at position 37 in tRNAs that read codons beginning with uridine. This Corynebacterium jeikeium (strain K411) protein is tRNA-2-methylthio-N(6)-dimethylallyladenosine synthase.